A 245-amino-acid polypeptide reads, in one-letter code: 1-(5-phosphoribosyl)-5-[(5-phosphoribosylamino)methylideneamino] imidazole-4-carboxamide isomerase (245 aa).

D8 (proton acceptor) is an active-site residue. Catalysis depends on D130, which acts as the Proton donor.

Belongs to the HisA/HisF family.

It localises to the cytoplasm. It catalyses the reaction 1-(5-phospho-beta-D-ribosyl)-5-[(5-phospho-beta-D-ribosylamino)methylideneamino]imidazole-4-carboxamide = 5-[(5-phospho-1-deoxy-D-ribulos-1-ylimino)methylamino]-1-(5-phospho-beta-D-ribosyl)imidazole-4-carboxamide. It functions in the pathway amino-acid biosynthesis; L-histidine biosynthesis; L-histidine from 5-phospho-alpha-D-ribose 1-diphosphate: step 4/9. This is 1-(5-phosphoribosyl)-5-[(5-phosphoribosylamino)methylideneamino] imidazole-4-carboxamide isomerase from Pseudomonas putida (strain GB-1).